The sequence spans 657 residues: UvrABC system protein B (657 aa).

The Helicase ATP-binding domain occupies 24–409 (AGVRNQVKSQ…SGHIVQQIIR (386 aa)). 37 to 44 (GTTGSGKT) provides a ligand contact to ATP. A Beta-hairpin motif is present at residues 90 to 113 (YYDYYQPEAYIARSDTYIEKSLLI). A Helicase C-terminal domain is found at 426–589 (QVDDLLEEIR…IVPKPIIKAI (164 aa)). A UVR domain is found at 617–652 (EEQIKKYEALMQRAAKEFRFNEAAKYRDAMQACKEQ).

This sequence belongs to the UvrB family. Forms a heterotetramer with UvrA during the search for lesions. Interacts with UvrC in an incision complex.

The protein localises to the cytoplasm. The UvrABC repair system catalyzes the recognition and processing of DNA lesions. A damage recognition complex composed of 2 UvrA and 2 UvrB subunits scans DNA for abnormalities. Upon binding of the UvrA(2)B(2) complex to a putative damaged site, the DNA wraps around one UvrB monomer. DNA wrap is dependent on ATP binding by UvrB and probably causes local melting of the DNA helix, facilitating insertion of UvrB beta-hairpin between the DNA strands. Then UvrB probes one DNA strand for the presence of a lesion. If a lesion is found the UvrA subunits dissociate and the UvrB-DNA preincision complex is formed. This complex is subsequently bound by UvrC and the second UvrB is released. If no lesion is found, the DNA wraps around the other UvrB subunit that will check the other stand for damage. The polypeptide is UvrABC system protein B (Chlamydia pneumoniae (Chlamydophila pneumoniae)).